A 1868-amino-acid polypeptide reads, in one-letter code: Dedicator of cytokinesis protein 5 (1868 aa).

Positions 8–69 (KRQKYGVAIY…PETYIHLKEA (62 aa)) constitute an SH3 domain. Ser365 bears the Phosphoserine mark. The 185-residue stretch at 443-627 (RNDIYVTLIH…DSFQIATLIC (185 aa)) folds into the C2 DOCK-type domain. At Lys818 the chain carries N6-acetyllysine. Residues 1231–1642 (YKDKKREDIY…VEKLYGVITL (412 aa)) form the DOCKER domain. The segment covering 1681–1692 (STSSNSSDNASS) has biased composition (low complexity). 2 disordered regions span residues 1681-1730 (STSS…RISK) and 1742-1868 (QVIA…PGSQ). Positions 1704 to 1728 (LFERRASSGARVEDLPPKEDSENRI) are enriched in basic and acidic residues. Phosphoserine is present on residues Ser1755, Ser1765, Ser1771, Ser1784, and Ser1788. Position 1793 is a phosphothreonine (Thr1793). Over residues 1796–1810 (ATRTLSSPSLQTDGL) the composition is skewed to polar residues. Ser1832 and Ser1867 each carry phosphoserine.

The protein belongs to the DOCK family. As to quaternary structure, interacts with CRK and CRKL. Interacts (via N-terminus) with tensin TNS3 (via N-terminus); the interaction increases DOCK5 guanine nucleotide exchange activity towards Rac. Interacts with ELMO1. As to expression, highly expressed in lens, where it predominantly localizes to anterior epithelial cells, and is weakly expressed in lens fiber (at protein level). Expressed in brain, eye, lung, spleen and kidney, but not in thymus or peripheral blood leukocytes.

It is found in the cytoplasm. Its subcellular location is the cell membrane. The protein localises to the cell projection. The protein resides in the podosome. In terms of biological role, guanine nucleotide exchange factor (GEF) for Rho and Rac. GEF proteins activate small GTPases by exchanging bound GDP for free GTP. Along with DOCK1, mediates CRK/CRKL regulation of epithelial and endothelial cell spreading and migration on type IV collagen. The protein is Dedicator of cytokinesis protein 5 of Mus musculus (Mouse).